A 156-amino-acid polypeptide reads, in one-letter code: Small ribosomal subunit protein uS7 (156 aa).

Belongs to the universal ribosomal protein uS7 family. In terms of assembly, part of the 30S ribosomal subunit. Contacts proteins S9 and S11.

One of the primary rRNA binding proteins, it binds directly to 16S rRNA where it nucleates assembly of the head domain of the 30S subunit. Is located at the subunit interface close to the decoding center, probably blocks exit of the E-site tRNA. The chain is Small ribosomal subunit protein uS7 from Nitrosococcus oceani (strain ATCC 19707 / BCRC 17464 / JCM 30415 / NCIMB 11848 / C-107).